Here is a 421-residue protein sequence, read N- to C-terminus: Imidazolonepropionase (421 aa).

Fe(3+) is bound by residues His-81 and His-83. Zn(2+)-binding residues include His-81 and His-83. 4-imidazolone-5-propanoate is bound by residues Arg-90, Tyr-153, and His-186. Tyr-153 lines the N-formimidoyl-L-glutamate pocket. His-251 is a binding site for Fe(3+). Residue His-251 participates in Zn(2+) binding. Residue Glu-254 participates in 4-imidazolone-5-propanoate binding. A Fe(3+)-binding site is contributed by Asp-326. Asp-326 contributes to the Zn(2+) binding site. N-formimidoyl-L-glutamate is bound by residues Asn-328 and Gly-330. Ser-331 contacts 4-imidazolone-5-propanoate.

This sequence belongs to the metallo-dependent hydrolases superfamily. HutI family. Zn(2+) is required as a cofactor. Requires Fe(3+) as cofactor.

It localises to the cytoplasm. The enzyme catalyses 4-imidazolone-5-propanoate + H2O = N-formimidoyl-L-glutamate. The protein operates within amino-acid degradation; L-histidine degradation into L-glutamate; N-formimidoyl-L-glutamate from L-histidine: step 3/3. Functionally, catalyzes the hydrolytic cleavage of the carbon-nitrogen bond in imidazolone-5-propanoate to yield N-formimidoyl-L-glutamate. It is the third step in the universal histidine degradation pathway. This is Imidazolonepropionase from Streptococcus pyogenes serotype M2 (strain MGAS10270).